Consider the following 455-residue polypeptide: Dihydrolipoyllysine-residue succinyltransferase component of 2-oxoglutarate dehydrogenase complex, mitochondrial (455 aa).

A mitochondrion-targeting transit peptide spans 1-68 (MLSRSRCASR…RFFRTTAVCK (68 aa)). One can recognise a Lipoyl-binding domain in the interval 71–145 (VITVKTPAFA…EGGTPLFTLR (75 aa)). Position 82 is a phosphoserine (S82). At K111 the chain carries N6-lipoyllysine. N6-acetyllysine is present on K155. Over residues 155–173 (KPAAAPAAAAPKAEPTVSA) the composition is skewed to low complexity. The disordered stretch occupies residues 155-220 (KPAAAPAAAA…PRAEAGAGVG (66 aa)). Positions 174-193 (VPPPPAAPIPTQMPPVPSPS) are enriched in pro residues. N6-acetyllysine occurs at positions 269, 274, 275, 279, and 309. Residues H426 and D430 contribute to the active site.

This sequence belongs to the 2-oxoacid dehydrogenase family. In terms of assembly, the 2-oxoglutarate dehydrogenase complex is composed of OGDH (2-oxoglutarate dehydrogenase; E1), DLST (dihydrolipoamide succinyltransferase; E2), DLD (dihydrolipoamide dehydrogenase; E3) and the assembly factor KGD4. It contains multiple copies of the three enzymatic components (E1, E2 and E3). In the nucleus, the 2-oxoglutarate dehydrogenase complex associates with KAT2A. Interacts with ABHD11; this interaction maintains the functional lipoylation of the 2-oxoglutarate dehydrogenase complex. (R)-lipoate serves as cofactor.

It localises to the mitochondrion matrix. The protein localises to the nucleus. It catalyses the reaction N(6)-[(R)-dihydrolipoyl]-L-lysyl-[protein] + succinyl-CoA = N(6)-[(R)-S(8)-succinyldihydrolipoyl]-L-lysyl-[protein] + CoA. It functions in the pathway amino-acid degradation; L-lysine degradation via saccharopine pathway; glutaryl-CoA from L-lysine: step 6/6. It participates in carbohydrate metabolism; tricarboxylic acid cycle. Its function is as follows. Dihydrolipoamide succinyltransferase (E2) component of the 2-oxoglutarate dehydrogenase complex. The 2-oxoglutarate dehydrogenase complex catalyzes the overall conversion of 2-oxoglutarate to succinyl-CoA and CO(2). The 2-oxoglutarate dehydrogenase complex is mainly active in the mitochondrion. A fraction of the 2-oxoglutarate dehydrogenase complex also localizes in the nucleus and is required for lysine succinylation of histones: associates with KAT2A on chromatin and provides succinyl-CoA to histone succinyltransferase KAT2A. In Bos taurus (Bovine), this protein is Dihydrolipoyllysine-residue succinyltransferase component of 2-oxoglutarate dehydrogenase complex, mitochondrial.